Consider the following 173-residue polypeptide: MFRWYQAKLAKQPILTASVTSAVLFGSGDVLAQQVVDRKGLEKHDFARTGRMALYGGAIFGPAATTWFGFLQRNVVLKNSKATIVARVAADQCLFTPTHLTCFLTSMAIMEGSDPIEKWRNSFLPSYKANLTIWPLVQGVNFSIVPLEYRVLVVNLVSLGWNCLLSMINSGDK.

Helical transmembrane passes span 12-32 (QPIL…DVLA), 52-72 (MALY…GFLQ), 129-149 (ANLT…PLEY), and 151-171 (VLVV…INSG).

Belongs to the peroxisomal membrane protein PXMP2/4 family.

It localises to the mitochondrion inner membrane. Functionally, may be involved in cellular response to stress. Required to maintain mitochondrial DNA (mtDNA) integrity and stability. This is Protein sym1 (sym1) from Aspergillus oryzae (strain ATCC 42149 / RIB 40) (Yellow koji mold).